The chain runs to 714 residues: MEMASAFTLNVRLDNIAIITIDVPGEKMNTLKAEFASQVRAIIKQLRENKELRGVVFVSAKPDNFIAGADINMIGNCKTAQEAEVLARQGQQLMAEIHALPIPVIAAIHGACLGGGLELALACHGRVCTDDPKTVLGLPEVQLGLLPGSGGTQRLPRLIGVSTALEMILTGKQLRAKQAVKLGLVDDVVPHSILLEAAVELAKQDRPSSRPLPVRERILAGPLGRALLFKMVGKKTEHKTQGNYPATERILEVVETGLAQGTSSGYDAEARAFGELAMTPQSQALRNIFFASTEVKKDPGSDAPPAPLNSVGILGGGLMGGGIAYVTACKAGLPVRIKDINPRGINHALKYSWDQLEGKVRRRHLKASERDKQLALISGTTDYCGFAHRDLIIEAVFENLELKQQMVAEVEQNCATHTIFASNTSSLPIGDIAAHAARPEQVIGLHFFSPVEKMPLVEIIPHASTSAQTIATTVKLAKKQGKTPIVVRDKAGFYVNRILAPYINEAIRMLTEGERIEHIDAALVKFGFPVGPIQLLDEVGIDTGTKIIPVLEAAYGERFSAPANVVSSILNDDRKGRKNGRGFYLYGQKGRKSKKQVDPAIYPLIGAQGQGRLSAPQVAERCVMLMLNEAVRCLDEQVIRSVRDGDIGAVFGIGFPPFLGGPFRYIDSLGAGEVVAIMQRLATQYGSRFTPCDRLVEMSERGESFWKTTATDLQ.

The enoyl-CoA hydratase stretch occupies residues 1-190 (MEMASAFTLN…KLGLVDDVVP (190 aa)). The 3-hydroxyacyl-CoA dehydrogenase stretch occupies residues 306–714 (APLNSVGILG…FWKTTATDLQ (409 aa)).

The protein in the N-terminal section; belongs to the enoyl-CoA hydratase/isomerase family. In the central section; belongs to the 3-hydroxyacyl-CoA dehydrogenase family. Heterotetramer of two alpha chains (FadJ) and two beta chains (FadI).

It is found in the cytoplasm. The enzyme catalyses a (3S)-3-hydroxyacyl-CoA = a (2E)-enoyl-CoA + H2O. It carries out the reaction a 4-saturated-(3S)-3-hydroxyacyl-CoA = a (3E)-enoyl-CoA + H2O. The catalysed reaction is a (3S)-3-hydroxyacyl-CoA + NAD(+) = a 3-oxoacyl-CoA + NADH + H(+). It catalyses the reaction (3S)-3-hydroxybutanoyl-CoA = (3R)-3-hydroxybutanoyl-CoA. It participates in lipid metabolism; fatty acid beta-oxidation. Functionally, catalyzes the formation of a hydroxyacyl-CoA by addition of water on enoyl-CoA. Also exhibits 3-hydroxyacyl-CoA epimerase and 3-hydroxyacyl-CoA dehydrogenase activities. The protein is Fatty acid oxidation complex subunit alpha of Escherichia coli O81 (strain ED1a).